Here is a 499-residue protein sequence, read N- to C-terminus: Glutamyl-tRNA(Gln) amidotransferase subunit A (499 aa).

Catalysis depends on charge relay system residues lysine 79 and serine 154. Catalysis depends on serine 178, which acts as the Acyl-ester intermediate.

This sequence belongs to the amidase family. GatA subfamily. Heterotrimer of A, B and C subunits.

The enzyme catalyses L-glutamyl-tRNA(Gln) + L-glutamine + ATP + H2O = L-glutaminyl-tRNA(Gln) + L-glutamate + ADP + phosphate + H(+). In terms of biological role, allows the formation of correctly charged Gln-tRNA(Gln) through the transamidation of misacylated Glu-tRNA(Gln) in organisms which lack glutaminyl-tRNA synthetase. The reaction takes place in the presence of glutamine and ATP through an activated gamma-phospho-Glu-tRNA(Gln). This is Glutamyl-tRNA(Gln) amidotransferase subunit A from Psychrobacter sp. (strain PRwf-1).